The primary structure comprises 879 residues: Alanine--tRNA ligase (879 aa).

Zn(2+) is bound by residues His-566, His-570, Cys-668, and His-672.

This sequence belongs to the class-II aminoacyl-tRNA synthetase family. The cofactor is Zn(2+).

The protein resides in the cytoplasm. It carries out the reaction tRNA(Ala) + L-alanine + ATP = L-alanyl-tRNA(Ala) + AMP + diphosphate. In terms of biological role, catalyzes the attachment of alanine to tRNA(Ala) in a two-step reaction: alanine is first activated by ATP to form Ala-AMP and then transferred to the acceptor end of tRNA(Ala). Also edits incorrectly charged Ser-tRNA(Ala) and Gly-tRNA(Ala) via its editing domain. This Clostridium kluyveri (strain ATCC 8527 / DSM 555 / NBRC 12016 / NCIMB 10680 / K1) protein is Alanine--tRNA ligase.